A 63-amino-acid polypeptide reads, in one-letter code: Large ribosomal subunit protein uL29 (63 aa).

Belongs to the universal ribosomal protein uL29 family.

The chain is Large ribosomal subunit protein uL29 from Vibrio campbellii (strain ATCC BAA-1116).